The sequence spans 352 residues: Transcription factor RSL2 (352 aa).

Over residues 160–169 the composition is skewed to polar residues; that stretch reads SVTTTKSLTG. Positions 160 to 277 are disordered; sequence SVTTTKSLTG…ASRGAATDPQ (118 aa). Residues 183–192 are compositionally biased toward basic residues; the sequence is KRARVNKRAQ. Over residues 223–232 the composition is skewed to polar residues; sequence SRQNSSTTFC. Residues 272 to 285 are basic motif; it reads AATDPQSLYARKRR. The region spanning 272-321 is the bHLH domain; sequence AATDPQSLYARKRRERINERLRILQNLVPNGTKVDISTMLEEAVHYVKFL. Residues 286-321 are helix-loop-helix motif; the sequence is ERINERLRILQNLVPNGTKVDISTMLEEAVHYVKFL.

As to quaternary structure, homodimer. As to expression, expressed in roots. Expressed in root epidermal hair cells.

It localises to the nucleus. Functionally, transcription factor involved in the regulation of root hair elongation. Does not seem to be a direct transcriptional target of RHD6 and RSL1. Involved in the regulation of root hair elongation in response to low phosphate. In Arabidopsis thaliana (Mouse-ear cress), this protein is Transcription factor RSL2.